Consider the following 245-residue polypeptide: tRNA pseudouridine synthase A (245 aa).

The active-site Nucleophile is the Asp-52. Tyr-111 lines the substrate pocket.

This sequence belongs to the tRNA pseudouridine synthase TruA family. Homodimer.

The catalysed reaction is uridine(38/39/40) in tRNA = pseudouridine(38/39/40) in tRNA. Functionally, formation of pseudouridine at positions 38, 39 and 40 in the anticodon stem and loop of transfer RNAs. The protein is tRNA pseudouridine synthase A of Nitrobacter hamburgensis (strain DSM 10229 / NCIMB 13809 / X14).